A 589-amino-acid chain; its full sequence is Capsid scaffolding protein (589 aa).

Active-site charge relay system residues include His-47, Ser-118, and His-142. A compositionally biased stretch (basic and acidic residues) spans 264 to 273 (EKERPKEPEQ). A disordered region spans residues 264–283 (EKERPKEPEQSHVPTESMSH). Residues 307–326 (HDGVYLPKDAFFSLIGASRP) are interaction with pAP. 2 disordered regions span residues 421 to 478 (RSRS…GDRY) and 514 to 552 (ASPTTTTSHQAEASEPQASTAAAAPSTASSHGSKSAERG). 2 short sequence motifs (nuclear localization signal) span residues 428–433 (KRRRER) and 453–459 (KARKRLK). Residues 453–462 (KARKRLKAHH) show a composition bias toward basic residues. The segment covering 514-543 (ASPTTTTSHQAEASEPQASTAAAAPSTASS) has biased composition (low complexity). Positions 569–589 (PPKDMVDLNRRLFVAALNKME) are interaction with major capsid protein.

The protein belongs to the herpesviridae capsid scaffolding protein family. Homomultimer. Interacts with major capsid protein. As to quaternary structure, exists in a monomer-dimer equilibrium with the dimer being the active species. Post-translationally, capsid scaffolding protein is cleaved by assemblin after formation of the spherical procapsid. As a result, the capsid obtains its mature, icosahedral shape. Cleavages occur at two or more sites: release (R-site) and maturation (M-site).

Its subcellular location is the host cytoplasm. It localises to the host nucleus. It carries out the reaction Cleaves -Ala-|-Ser- and -Ala-|-Ala- bonds in the scaffold protein.. Functionally, acts as a scaffold protein by binding major capsid protein in the cytoplasm, inducing the nuclear localization of both proteins. Multimerizes in the nucleus such as major capsid protein forms the icosahedral T=16 capsid. Autocatalytic cleavage releases the assembly protein, and subsequently abolishes interaction with major capsid protein. Cleavages products are evicted from the capsid before or during DNA packaging. Protease that plays an essential role in virion assembly within the nucleus. Catalyzes the cleavage of the assembly protein after formation of the spherical procapsid. By that cleavage, the capsid matures and gains its icosahedral shape. The cleavage sites seem to include -Ala-Ser-, -Ala-Ala-, as well as Ala-Thr bonds. Assemblin and cleavages products are evicted from the capsid before or during DNA packaging. Its function is as follows. Plays a major role in capsid assembly. Acts as a scaffold protein by binding major capsid protein. Multimerizes in the nucleus such as major capsid protein forms the icosahedral T=16 capsid. Cleaved by assemblin after capsid completion. The cleavages products are evicted from the capsid before or during DNA packaging. The chain is Capsid scaffolding protein (UL80) from Simian cytomegalovirus (strain Colburn).